A 228-amino-acid chain; its full sequence is Protein N-lysine methyltransferase METTL21D (228 aa).

The residue at position 2 (alanine 2) is an N-acetylalanine. Residues tryptophan 43, 75–77, aspartate 96, tryptophan 126, alanine 142, and tyrosine 147 contribute to the S-adenosyl-L-methionine site; that span reads GSG.

It belongs to the methyltransferase superfamily. METTL21 family. Interacts with ALKBH6. Interacts with ASPSCR1 and UBXN6; interaction with ASPSCR1, but not with UBXN6, enhances VCP methylation. In terms of tissue distribution, widely expressed.

It localises to the cytoplasm. The catalysed reaction is L-lysyl-[protein] + 3 S-adenosyl-L-methionine = N(6),N(6),N(6)-trimethyl-L-lysyl-[protein] + 3 S-adenosyl-L-homocysteine + 3 H(+). In terms of biological role, protein N-lysine methyltransferase that specifically trimethylates 'Lys-315' of VCP/p97; this modification may decrease VCP ATPase activity. This Mus musculus (Mouse) protein is Protein N-lysine methyltransferase METTL21D (Vcpkmt).